Here is a 415-residue protein sequence, read N- to C-terminus: Transposase for insertion sequence element IS1081 (415 aa).

Belongs to the transposase mutator family.

Its function is as follows. Required for the transposition of the insertion element. This is Transposase for insertion sequence element IS1081 from Mycobacterium bovis (strain ATCC BAA-935 / AF2122/97).